Reading from the N-terminus, the 225-residue chain is NAD(P)H-quinone oxidoreductase subunit K, chloroplastic (225 aa).

Positions 43, 44, 108, and 139 each coordinate [4Fe-4S] cluster.

Belongs to the complex I 20 kDa subunit family. As to quaternary structure, NDH is composed of at least 16 different subunits, 5 of which are encoded in the nucleus. Requires [4Fe-4S] cluster as cofactor.

It is found in the plastid. The protein resides in the chloroplast thylakoid membrane. The catalysed reaction is a plastoquinone + NADH + (n+1) H(+)(in) = a plastoquinol + NAD(+) + n H(+)(out). It catalyses the reaction a plastoquinone + NADPH + (n+1) H(+)(in) = a plastoquinol + NADP(+) + n H(+)(out). In terms of biological role, NDH shuttles electrons from NAD(P)H:plastoquinone, via FMN and iron-sulfur (Fe-S) centers, to quinones in the photosynthetic chain and possibly in a chloroplast respiratory chain. The immediate electron acceptor for the enzyme in this species is believed to be plastoquinone. Couples the redox reaction to proton translocation, and thus conserves the redox energy in a proton gradient. In Lobularia maritima (Sweet alyssum), this protein is NAD(P)H-quinone oxidoreductase subunit K, chloroplastic.